We begin with the raw amino-acid sequence, 62 residues long: uncharacterized protein (62 aa).

Over residues 1-18 (MTTNRVDPLEQTSPNTPT) the composition is skewed to polar residues. A disordered region spans residues 1–24 (MTTNRVDPLEQTSPNTPTSKREKA).

This is an uncharacterized protein from Rickettsia conorii (strain ATCC VR-613 / Malish 7).